Consider the following 224-residue polypeptide: Respiratory supercomplex factor 2, mitochondrial (224 aa).

Residues 1–13 (MKILTQDEIEAHR) are Mitochondrial intermembrane-facing. Residues 14 to 38 (SHTLKGGIEGALAGFAISAIIFKVL) traverse the membrane as a helical segment. Topologically, residues 39-47 (PRRYPKFKP) are mitochondrial matrix. The helical transmembrane segment at 48-75 (STLTWSIKTALWITPPTVLTAICAEEAS) threads the bilayer. Topologically, residues 76–103 (NNFDATMYGSGSSSEDALDEHRRWKSLS) are mitochondrial intermembrane. An HIG1 domain is found at 89–180 (SEDALDEHRR…YENKLHPNKQ (92 aa)). A helical membrane pass occupies residues 104–133 (TKDKFVEGLSNNKYKIITGAWAASLYGSWV). Residues 134–142 (IVNKDPIMT) are Mitochondrial matrix-facing. The helical transmembrane segment at 143-173 (KAQKIVQARMYAQFITVGLLLASVGLSMYEN) threads the bilayer. Residues 174 to 184 (KLHPNKQKVNE) lie on the Mitochondrial intermembrane side of the membrane. The helical transmembrane segment at 185–204 (MRRWENALRVAEEEERLEKE) threads the bilayer. Residues 205 to 224 (GRRTGYVSNEERINSKIFKS) are Mitochondrial matrix-facing.

As to quaternary structure, associates with a subpopulation of the cytochrome bc1-cytochrome c oxidase supercomplexes. Associates in substoichiometric amounts with complex IV. Interacts with COX3.

It is found in the mitochondrion membrane. Its function is as follows. Assembly factor that plays a role in the assembly of the respiratory chain supercomplexes (SCs) composed of ubiquinol-cytochrome c oxidoreductase (cytochrome b-c1 complex, complex III, CIII) and cytochrome c oxidase (complex IV, CIV). May be required for late-stage assembly of the COX12 and COX13 subunits. Required for the generation and maintenance of a normal proton motive force (PMF) across the inner mitochondrial membrane (IMM) by preventing proton leakage through an inactive population of CIV that accumulates when RCF1 and/or RCF2 proteins are absent. The sequence is that of Respiratory supercomplex factor 2, mitochondrial (RCF2) from Saccharomyces cerevisiae (strain ATCC 204508 / S288c) (Baker's yeast).